The following is a 104-amino-acid chain: Ribonucleotide reductase inhibitor protein SML1 (104 aa).

Residue M1 is modified to N-acetylmethionine. The tract at residues 43–62 is disordered; the sequence is PMLSTQNSMGSSASASASSL. S56, S58, and S60 each carry phosphoserine; by DUN1.

Homodimer; disulfide-linked. Interacts with RNR1. Phosphorylated by DUN1, a downstream effector of the Mec1/Rad53 checkpoint pathway, in response to DNA damage. This promotes ubiquitination of SML1 and targets it for degradation by the 26S proteasome.

Its subcellular location is the nucleus. It is found in the cytoplasm. Strong inhibitor of ribonucleotide reductase (RNR1) and is involved in regulating dNTP production. The polypeptide is Ribonucleotide reductase inhibitor protein SML1 (SML1) (Saccharomyces cerevisiae (strain ATCC 204508 / S288c) (Baker's yeast)).